The sequence spans 93 residues: Pyrimidine/purine nucleoside phosphorylase (93 aa).

Belongs to the nucleoside phosphorylase PpnP family.

It carries out the reaction a purine D-ribonucleoside + phosphate = a purine nucleobase + alpha-D-ribose 1-phosphate. The catalysed reaction is adenosine + phosphate = alpha-D-ribose 1-phosphate + adenine. It catalyses the reaction cytidine + phosphate = cytosine + alpha-D-ribose 1-phosphate. The enzyme catalyses guanosine + phosphate = alpha-D-ribose 1-phosphate + guanine. It carries out the reaction inosine + phosphate = alpha-D-ribose 1-phosphate + hypoxanthine. The catalysed reaction is thymidine + phosphate = 2-deoxy-alpha-D-ribose 1-phosphate + thymine. It catalyses the reaction uridine + phosphate = alpha-D-ribose 1-phosphate + uracil. The enzyme catalyses xanthosine + phosphate = alpha-D-ribose 1-phosphate + xanthine. Functionally, catalyzes the phosphorolysis of diverse nucleosides, yielding D-ribose 1-phosphate and the respective free bases. Can use uridine, adenosine, guanosine, cytidine, thymidine, inosine and xanthosine as substrates. Also catalyzes the reverse reactions. The polypeptide is Pyrimidine/purine nucleoside phosphorylase (Pseudoalteromonas atlantica (strain T6c / ATCC BAA-1087)).